The primary structure comprises 647 residues: Putative ankyrin repeat protein L764 (647 aa).

9 ANK repeats span residues 123-154 (LKDR…QINL), 202-231 (LTQE…EYDL), 233-256 (EIIN…SLNE), 258-284 (NVNI…TINS), 289-319 (SMFS…DLTV), 348-377 (DCNL…DLKK), 401-431 (NDVN…NIDL), 529-558 (FILK…DNNE), and 588-617 (NGQN…DVKN).

The chain is Putative ankyrin repeat protein L764 from Acanthamoeba polyphaga (Amoeba).